We begin with the raw amino-acid sequence, 624 residues long: MNNKNKITHTFQSEVKELLHLMIHSLYSNKEIFLRELISNASDAIEKIRFEKLYSLKKYRENLYTPKIKISIKKDEKKIIISDNGIGMTYKEVIKNLGTIAKSGTKSFLNKIQNIEKKEKNDFIGQFGVGFYSSFIVSNSVSVYTRHAKEKKNIGTLWISEGKGKYSVEKISKEEHGTIVELSLKSSEKEFLEIWKIKNIIKKYSDHISIPIEIENYDEKTKTISWEKINKAQALWTINKNNITKKKYQDFYKYLTNDSEKPLLWSHNKVEGTQEYINLLYIPKKATWDIWHQENKHGLKLYVKHVFIMDEATQFLPNYLRFVKGIIDSQDLPLNISREILQDSSITHILRKSLTKRILNILNNLSENNIKKYQKFWNVFGIIIKEGIAEDSENKTILSNLLRFSSIKKGNIEQTLSLNEYIKNMKKNQKKIYFITSDSYKSALNSPNLEIFKENDIDVLILSEKIDEWMMNYLTEFNNIKFQSVSKLDDTIDSLLLKKNVSNEKNTFNEFIEKTKKILKNKVKDVKITYRLKNTPAIVLTDTNDMSTQMAKIFSAAGQPIPKIKYILEINPLHPLIKKIEKIKNEKDFSNWIKIIFDQSILSEKGSLENPHKFIQRINNFFIS.

Residues 1 to 338 are a; substrate-binding; the sequence is MNNKNKITHT…SQDLPLNISR (338 aa). Residues 339-552 are b; sequence EILQDSSITH…TNDMSTQMAK (214 aa). The interval 553 to 624 is c; it reads IFSAAGQPIP…IQRINNFFIS (72 aa).

It belongs to the heat shock protein 90 family. In terms of assembly, homodimer.

Its subcellular location is the cytoplasm. Functionally, molecular chaperone. Has ATPase activity. The polypeptide is Chaperone protein HtpG (Buchnera aphidicola subsp. Cinara cedri (strain Cc)).